The primary structure comprises 196 residues: Inosine triphosphate pyrophosphatase 1 (196 aa).

20 to 25 is a binding site for ITP; the sequence is TGNDGK. Glu48 is a binding site for Mg(2+). ITP is bound by residues Lys61, 77-78, Lys94, 153-156, Lys177, and 182-183; these read DT, FGWD, and PR.

Belongs to the HAM1 NTPase family. Homodimer. It depends on Mg(2+) as a cofactor. Mn(2+) serves as cofactor.

It localises to the cytoplasm. The enzyme catalyses ITP + H2O = IMP + diphosphate + H(+). It catalyses the reaction dITP + H2O = dIMP + diphosphate + H(+). It carries out the reaction XTP + H2O = XMP + diphosphate + H(+). Pyrophosphatase that hydrolyzes non-canonical purine nucleotides such as inosine triphosphate (ITP), deoxyinosine triphosphate (dITP) or xanthosine 5'-triphosphate (XTP) to their respective monophosphate derivatives. The enzyme does not distinguish between the deoxy- and ribose forms. Probably excludes non-canonical purines from RNA and DNA precursor pools, thus preventing their incorporation into RNA and DNA and avoiding chromosomal lesions. The protein is Inosine triphosphate pyrophosphatase 1 of Trypanosoma cruzi (strain CL Brener).